Reading from the N-terminus, the 496-residue chain is DEAD-box ATP-dependent RNA helicase 38 (496 aa).

The disordered stretch occupies residues 1 to 91; that stretch reads MADTVEKVPT…SGDTPYTSAS (91 aa). Alanine 2 bears the N-acetylalanine mark. A compositionally biased stretch (low complexity) spans 7-25; sequence KVPTVVESSSSSTVEASNS. Residues 27 to 40 are compositionally biased toward basic and acidic residues; the sequence is EKTEPTTEKKKWGD. The span at 41–51 shows a compositional bias: acidic residues; it reads VEDDDDEEEAV. Over residues 78–91 the composition is skewed to polar residues; it reads KAVTSGDTPYTSAS. Residues 91–120 carry the Q motif motif; that stretch reads SRFEDLNLSPELMKGLYVEMKFEKPSKIQA. In terms of domain architecture, Helicase ATP-binding spans 125–301; that stretch reads MIMTPPHKHL…ARTVKDPNQL (177 aa). 138 to 145 is an ATP binding site; it reads AHNGSGKT. A DEAD box motif is present at residues 245 to 248; it reads DEAD. Residues 329 to 483 form the Helicase C-terminal domain; sequence VIKDQIMELG…EIKSWNSEEE (155 aa).

The protein belongs to the DEAD box helicase family. DDX19/DBP5 subfamily. In terms of assembly, interacts with NUP214 (via N-terminus). Constitutively expressed.

The protein localises to the cytoplasm. Its subcellular location is the nucleus. It catalyses the reaction ATP + H2O = ADP + phosphate + H(+). Functionally, ATP-dependent RNA helicase essential for mRNA export from the nucleus. Plays an important role in the positive regulation of CBF/DREB transcription factors. The polypeptide is DEAD-box ATP-dependent RNA helicase 38 (RH38) (Arabidopsis thaliana (Mouse-ear cress)).